Here is a 287-residue protein sequence, read N- to C-terminus: 2' cyclic ADP-D-ribose synthase BtTIR (287 aa).

The TIR domain occupies 155–287; the sequence is KQYDFFISHA…DDIVENLKNL (133 aa). Residue glutamate 230 is part of the active site.

In terms of assembly, homodimer.

It catalyses the reaction NAD(+) = 2'cADPR + nicotinamide + H(+). Functionally, NAD(+) hydrolase (NADase) that cleaves NAD(+) into nicotinamide and 2' cyclic ADP-D-ribose (2'cADPR). This Bacteroides thetaiotaomicron protein is 2' cyclic ADP-D-ribose synthase BtTIR.